The following is a 149-amino-acid chain: Calmodulin (149 aa).

Alanine 2 is modified (N-acetylalanine). EF-hand domains lie at 8–43, 44–79, 81–116, and 117–149; these read EQIA…LGQN, PTEA…KMKD, DSEE…LGEK, and LTDE…MTAK. Aspartate 21, aspartate 23, aspartate 25, threonine 27, glutamate 32, aspartate 59, asparagine 61, threonine 63, glutamate 68, aspartate 94, aspartate 96, asparagine 98, tyrosine 100, and glutamate 105 together coordinate Ca(2+). An N6,N6,N6-trimethyllysine modification is found at lysine 116. 5 residues coordinate Ca(2+): aspartate 130, aspartate 132, aspartate 134, glutamine 136, and glutamate 141.

The protein belongs to the calmodulin family.

Functionally, calmodulin acts as part of a calcium signal transduction pathway by mediating the control of a large number of enzymes, ion channels, aquaporins and other proteins through calcium-binding. Calcium-binding is required for the activation of calmodulin. Among the enzymes to be stimulated by the calmodulin-calcium complex are a number of protein kinases, such as myosin light-chain kinases and calmodulin-dependent protein kinase type II (CaMK2), and phosphatases. This is Calmodulin from Myxine glutinosa (Atlantic hagfish).